A 165-amino-acid polypeptide reads, in one-letter code: 3-isopropylmalate dehydratase small subunit (165 aa).

This sequence belongs to the LeuD family. LeuD type 2 subfamily. As to quaternary structure, heterodimer of LeuC and LeuD.

It catalyses the reaction (2R,3S)-3-isopropylmalate = (2S)-2-isopropylmalate. The protein operates within amino-acid biosynthesis; L-leucine biosynthesis; L-leucine from 3-methyl-2-oxobutanoate: step 2/4. Its function is as follows. Catalyzes the isomerization between 2-isopropylmalate and 3-isopropylmalate, via the formation of 2-isopropylmaleate. This is 3-isopropylmalate dehydratase small subunit from Desulfovibrio desulfuricans (strain ATCC 27774 / DSM 6949 / MB).